The primary structure comprises 101 residues: Large ribosomal subunit protein uL24 (101 aa).

Belongs to the universal ribosomal protein uL24 family. In terms of assembly, part of the 50S ribosomal subunit.

One of two assembly initiator proteins, it binds directly to the 5'-end of the 23S rRNA, where it nucleates assembly of the 50S subunit. In terms of biological role, one of the proteins that surrounds the polypeptide exit tunnel on the outside of the subunit. In Streptococcus equi subsp. zooepidemicus (strain H70), this protein is Large ribosomal subunit protein uL24.